We begin with the raw amino-acid sequence, 318 residues long: DNA polymerase IV (318 aa).

Residues 6 to 186 (IIHIDMDAFY…LPLGKIPGVG (181 aa)) form the UmuC domain. Mg(2+) contacts are provided by aspartate 10 and aspartate 104. Residue glutamate 105 is part of the active site.

This sequence belongs to the DNA polymerase type-Y family. As to quaternary structure, monomer. Mg(2+) serves as cofactor.

The protein resides in the cytoplasm. It catalyses the reaction DNA(n) + a 2'-deoxyribonucleoside 5'-triphosphate = DNA(n+1) + diphosphate. Poorly processive, error-prone DNA polymerase involved in untargeted mutagenesis. Copies undamaged DNA at stalled replication forks, which arise in vivo from mismatched or misaligned primer ends. These misaligned primers can be extended by PolIV. Exhibits no 3'-5' exonuclease (proofreading) activity. May be involved in translesional synthesis, in conjunction with the beta clamp from PolIII. The protein is DNA polymerase IV of Neisseria meningitidis serogroup B (strain ATCC BAA-335 / MC58).